Reading from the N-terminus, the 157-residue chain is MRIIGIDPGLARVGYGIIEIKNDKKILLDCGVIETGKEKKEEDRLYEIFKDLNELISHWKPNLAAVEKFFFYRSSTTISVVQARGVIMMVLASKKINISEYSPAQIKLTIAGSGKASKKEVLDAVMYNLELNKPPKPDDSADALAIALTKLNEEGFN.

Residues Asp-7, Glu-67, and Asp-139 contribute to the active site. Positions 7, 67, and 139 each coordinate Mg(2+).

Belongs to the RuvC family. Homodimer which binds Holliday junction (HJ) DNA. The HJ becomes 2-fold symmetrical on binding to RuvC with unstacked arms; it has a different conformation from HJ DNA in complex with RuvA. In the full resolvosome a probable DNA-RuvA(4)-RuvB(12)-RuvC(2) complex forms which resolves the HJ. Mg(2+) is required as a cofactor.

The protein localises to the cytoplasm. It carries out the reaction Endonucleolytic cleavage at a junction such as a reciprocal single-stranded crossover between two homologous DNA duplexes (Holliday junction).. Functionally, the RuvA-RuvB-RuvC complex processes Holliday junction (HJ) DNA during genetic recombination and DNA repair. Endonuclease that resolves HJ intermediates. Cleaves cruciform DNA by making single-stranded nicks across the HJ at symmetrical positions within the homologous arms, yielding a 5'-phosphate and a 3'-hydroxyl group; requires a central core of homology in the junction. The consensus cleavage sequence is 5'-(A/T)TT(C/G)-3'. Cleavage occurs on the 3'-side of the TT dinucleotide at the point of strand exchange. HJ branch migration catalyzed by RuvA-RuvB allows RuvC to scan DNA until it finds its consensus sequence, where it cleaves and resolves the cruciform DNA. This chain is Crossover junction endodeoxyribonuclease RuvC, found in Prochlorococcus marinus (strain MIT 9312).